A 274-amino-acid chain; its full sequence is Large ribosomal subunit protein uL2cz/uL2cy (274 aa).

Disordered regions lie at residues 1 to 25 (MAIHLYKTSTPSTRNGAVDSQVKSN) and 223 to 274 (MNPV…RRTK).

The protein belongs to the universal ribosomal protein uL2 family. Part of the 50S ribosomal subunit.

It is found in the plastid. Its subcellular location is the chloroplast. This chain is Large ribosomal subunit protein uL2cz/uL2cy (rpl2-A), found in Citrus sinensis (Sweet orange).